The sequence spans 664 residues: Gametogenetin-binding protein 2 (664 aa).

Disordered stretches follow at residues 375-425 (QEKK…NTSE) and 447-476 (KKGLTPHSNVSDCGYSSSLEGSEPGSQEGS). The span at 376–388 (EKKRQKKNRRKNK) shows a compositional bias: basic residues. A compositionally biased stretch (polar residues) spans 452–475 (PHSNVSDCGYSSSLEGSEPGSQEG).

The protein resides in the cytoplasm. May be involved in spermatogenesis. The protein is Gametogenetin-binding protein 2 (ggnbp2) of Xenopus laevis (African clawed frog).